Reading from the N-terminus, the 385-residue chain is Interleukin-13 receptor subunit alpha-2 (385 aa).

The signal sequence occupies residues 1-23; sequence MALMAVNTRCLCLFLLCTITGHS. Topologically, residues 24-336 are extracellular; it reads LEIKVNPPQD…WEGYTGPDSK (313 aa). 3 Fibronectin type-III domains span residues 30-130, 133-221, and 236-334; these read PPQD…ADEG, GTKI…PIRS, and PPEF…TGPD. A disulfide bridge connects residues Cys-61 and Cys-109. A glycan (N-linked (GlcNAc...) asparagine) is linked at Asn-111. A disulfide bond links Cys-141 and Cys-151. A glycan (N-linked (GlcNAc...) asparagine) is linked at Asn-164. Cys-180 and Cys-193 are joined by a disulfide. N-linked (GlcNAc...) asparagine glycans are attached at residues Asn-211 and Asn-295. The cysteines at positions 265 and 312 are disulfide-linked. A WSXWS motif motif is present at residues 318–322; the sequence is WSEWS. Residues 337 to 357 traverse the membrane as a helical segment; it reads IVFIVPVCLFFIFLLLLLCLI. Topologically, residues 358–385 are cytoplasmic; sequence VEKEDPEPTLSLHVDLNKEMYAYEETLC.

Belongs to the type I cytokine receptor family. Type 5 subfamily. As to quaternary structure, interacts with IL4RA. Interacts with high affinity to interleukin-13 (IL13), but not to interleukin-4 (IL4). In terms of processing, cleaved by MMP8 leading to a soluble form that is also able to interact with IL13.

It localises to the cell membrane. Cell surface receptor that plays a role in the regulation of IL-13-mediated responses. Functions as a decoy receptor that inhibits IL-13- and IL-4-mediated signal transduction via the JAK-STAT pathway and thereby modulates immune responses and inflammation. Serves as a functional signaling receptor for IL-13 in an alternative pathway involving AP-1 ultimately leading to the production of TGFB1. This is Interleukin-13 receptor subunit alpha-2 (Il13ra2) from Rattus norvegicus (Rat).